Here is a 1318-residue protein sequence, read N- to C-terminus: 1-phosphatidylinositol 4,5-bisphosphate phosphodiesterase classes I and II (1318 aa).

Residues 318 to 466 (DDMDQPMSHY…LRRKIIIKNK (149 aa)) enclose the PI-PLC X-box domain. Residues H333 and H378 contribute to the active site. The substrate site is built by K464 and K466. The segment covering 466-481 (KKKHHHHHHHHHHKKP) has biased composition (basic residues). 2 disordered regions span residues 466–489 (KKKH…TPAA) and 505–594 (QQVG…KETE). Composition is skewed to low complexity over residues 528 to 543 (ATGT…AGHA) and 554 to 563 (KDSTGSSDSD). Polar residues predominate over residues 571 to 580 (LPNTTPNLPS). Residues 585–594 (PPEKAQKETE) are compositionally biased toward basic and acidic residues. Residues 599-715 (ISALVNYVQP…GYLLKPEFMR (117 aa)) enclose the PI-PLC Y-box domain. Residues S628 and R655 each coordinate substrate. One can recognise a C2 domain in the interval 715 to 843 (RRSDRRLDPF…NLRSEVGQPI (129 aa)). Disordered regions lie at residues 1080 to 1112 (LDLG…TQES) and 1296 to 1318 (GSHS…EMKT). Positions 1088-1107 (ESAAADAGEDLAGGSSSLDG) are enriched in low complexity.

In terms of tissue distribution, expressed in neuronal cell bodies of the optic lobe, central brain, and thoracic ganglia in adults, and the brain of larvae.

The catalysed reaction is a 1,2-diacyl-sn-glycero-3-phospho-(1D-myo-inositol-4,5-bisphosphate) + H2O = 1D-myo-inositol 1,4,5-trisphosphate + a 1,2-diacyl-sn-glycerol + H(+). Its function is as follows. The production of the second messenger molecules diacylglycerol (DAG) and inositol 1,4,5-trisphosphate (IP3) is mediated by activated phosphatidylinositol-specific phospholipase C enzymes. This is 1-phosphatidylinositol 4,5-bisphosphate phosphodiesterase classes I and II (Plc21C) from Drosophila melanogaster (Fruit fly).